The primary structure comprises 145 residues: Putative transcriptional regulatory protein PYRAB13000 (145 aa).

This sequence belongs to the Tfx family.

In terms of biological role, putative transcriptional regulator. In Pyrococcus abyssi (strain GE5 / Orsay), this protein is Putative transcriptional regulatory protein PYRAB13000.